A 312-amino-acid chain; its full sequence is MLPRIRHNNFIGAVELFVKSSYTKTHSNNFFNNIHHAFKKKDWISNYDSLLTLREFFRCATQIDKSGYQVLSSKNETVHAMDKFLISFSLKDNGAEYTMTLRGSGFEYEEIPITINEYNSFMDFKNREFPLEQNRRLYAWDILQKKQSDIPKRIKGYIHQAIGDVSLGYALLEDIVSKLKRGKFELQIPGGGIKECDGWYIYEKIIDDNFAIVIESLGFALKIYGGDERFRNGSSVVLEDEDYSLIYNFLVNAGCQQVELAEQVDAIVSANLAADSDITKEKICEKYKSTIEAFKKEQLALPVLVRRKNSET.

This is an uncharacterized protein from Escherichia coli (strain K12).